A 374-amino-acid polypeptide reads, in one-letter code: Probable plastid-lipid-associated protein 3, chloroplastic (374 aa).

The N-terminal 46 residues, 1 to 46, are a transit peptide targeting the chloroplast; that stretch reads MAMPPPLFAAASHASLLLPSPTIHSSTGSRRPFRLPLRSSRRPPVA. Residues 19-148 are disordered; sequence PSPTIHSSTG…EDNEEERREE (130 aa). Low complexity predominate over residues 28-54; it reads GSRRPFRLPLRSSRRPPVAAAAASGVP. 2 stretches are compositionally biased toward pro residues: residues 64–73 and 127–136; these read APEPPSQPDP and PAPPPPPPPV.

This sequence belongs to the PAP/fibrillin family.

It is found in the plastid. The protein resides in the chloroplast. The chain is Probable plastid-lipid-associated protein 3, chloroplastic (PAP3) from Oryza sativa subsp. japonica (Rice).